Consider the following 219-residue polypeptide: MPRITKAEMSRLLPVYFIMGSNNCTKEPLQVLRDALEGGITIFQLREKGEGALTGEKRIDFAKELQALCKEYGVPFIVNDDVELALELDADGVHVGQDDEGITSVREKMGDKIIGVSAHTIEEARFAIENGADYLGVGPIFPTSTKKDTKAVQGTKGLAHFREQGITMPIVGIGGITIENTAAVIEAGADGVSVISAISLAESAYESTRKLAEEVNKSL.

Residues 44-48 (QLREK) and Asn-79 contribute to the 4-amino-2-methyl-5-(diphosphooxymethyl)pyrimidine site. Positions 80 and 99 each coordinate Mg(2+). Ser-117 lines the 4-amino-2-methyl-5-(diphosphooxymethyl)pyrimidine pocket. 143 to 145 (TST) lines the 2-[(2R,5Z)-2-carboxy-4-methylthiazol-5(2H)-ylidene]ethyl phosphate pocket. Position 146 (Lys-146) interacts with 4-amino-2-methyl-5-(diphosphooxymethyl)pyrimidine. 2-[(2R,5Z)-2-carboxy-4-methylthiazol-5(2H)-ylidene]ethyl phosphate is bound by residues Gly-175 and 195 to 196 (IS).

Belongs to the thiamine-phosphate synthase family. The cofactor is Mg(2+).

It carries out the reaction 2-[(2R,5Z)-2-carboxy-4-methylthiazol-5(2H)-ylidene]ethyl phosphate + 4-amino-2-methyl-5-(diphosphooxymethyl)pyrimidine + 2 H(+) = thiamine phosphate + CO2 + diphosphate. The catalysed reaction is 2-(2-carboxy-4-methylthiazol-5-yl)ethyl phosphate + 4-amino-2-methyl-5-(diphosphooxymethyl)pyrimidine + 2 H(+) = thiamine phosphate + CO2 + diphosphate. The enzyme catalyses 4-methyl-5-(2-phosphooxyethyl)-thiazole + 4-amino-2-methyl-5-(diphosphooxymethyl)pyrimidine + H(+) = thiamine phosphate + diphosphate. The protein operates within cofactor biosynthesis; thiamine diphosphate biosynthesis; thiamine phosphate from 4-amino-2-methyl-5-diphosphomethylpyrimidine and 4-methyl-5-(2-phosphoethyl)-thiazole: step 1/1. Condenses 4-methyl-5-(beta-hydroxyethyl)thiazole monophosphate (THZ-P) and 2-methyl-4-amino-5-hydroxymethyl pyrimidine pyrophosphate (HMP-PP) to form thiamine monophosphate (TMP). The polypeptide is Thiamine-phosphate synthase (Bacillus mycoides (strain KBAB4) (Bacillus weihenstephanensis)).